We begin with the raw amino-acid sequence, 379 residues long: Chaperone protein DnaJ (379 aa).

The J domain maps to 5–69 (EYYERLGVDK…QKRAAYDQYG (65 aa)). A CR-type zinc finger spans residues 141-223 (GVEKQVKYNR…CHGSGHEKVA (83 aa)). Zn(2+) contacts are provided by cysteine 154, cysteine 157, cysteine 171, cysteine 174, cysteine 197, cysteine 200, cysteine 211, and cysteine 214. CXXCXGXG motif repeat units lie at residues 154 to 161 (CHTCDGSG), 171 to 178 (CHKCGGRG), 197 to 204 (CDVCHGTG), and 211 to 218 (CTTCHGSG).

Belongs to the DnaJ family. In terms of assembly, homodimer. The cofactor is Zn(2+).

The protein localises to the cytoplasm. In terms of biological role, participates actively in the response to hyperosmotic and heat shock by preventing the aggregation of stress-denatured proteins and by disaggregating proteins, also in an autonomous, DnaK-independent fashion. Unfolded proteins bind initially to DnaJ; upon interaction with the DnaJ-bound protein, DnaK hydrolyzes its bound ATP, resulting in the formation of a stable complex. GrpE releases ADP from DnaK; ATP binding to DnaK triggers the release of the substrate protein, thus completing the reaction cycle. Several rounds of ATP-dependent interactions between DnaJ, DnaK and GrpE are required for fully efficient folding. Also involved, together with DnaK and GrpE, in the DNA replication of plasmids through activation of initiation proteins. This Lactococcus lactis subsp. cremoris (strain SK11) protein is Chaperone protein DnaJ.